The sequence spans 202 residues: Nascent polypeptide-associated complex subunit alpha (202 aa).

Residues Met1–Val19 are compositionally biased toward basic and acidic residues. A disordered region spans residues Met1 to Val41. The region spanning Ser45–Ala110 is the NAC-A/B domain. Residues Gln117–Glu127 are compositionally biased toward low complexity. The disordered stretch occupies residues Gln117–Ala165. A compositionally biased stretch (basic and acidic residues) spans His128 to Glu149. The segment covering Glu150–Gly162 has biased composition (acidic residues). The region spanning Leu163–Ile202 is the UBA domain.

It belongs to the NAC-alpha family. Part of the nascent polypeptide-associated complex (NAC), consisting of egd2 and egd1. NAC associates with ribosomes via egd1.

Its subcellular location is the cytoplasm. The protein resides in the nucleus. Component of the nascent polypeptide-associated complex (NAC), a dynamic component of the ribosomal exit tunnel, protecting the emerging polypeptides from interaction with other cytoplasmic proteins to ensure appropriate nascent protein targeting. The NAC complex also promotes mitochondrial protein import by enhancing productive ribosome interactions with the outer mitochondrial membrane and blocks the inappropriate interaction of ribosomes translating non-secretory nascent polypeptides with translocation sites in the membrane of the endoplasmic reticulum. Egd2 may also be involved in transcription regulation. The protein is Nascent polypeptide-associated complex subunit alpha (egd2) of Aspergillus oryzae (strain ATCC 42149 / RIB 40) (Yellow koji mold).